The chain runs to 328 residues: Ketol-acid reductoisomerase (NADP(+)) (328 aa).

The KARI N-terminal Rossmann domain occupies 1–179; that stretch reads MRVLYERDGD…GGGAAGIIET (179 aa). Residues 24–27, Arg-47, and Ser-51 contribute to the NADP(+) site; that span reads YGSQ. His-106 is a catalytic residue. Residue Gly-132 participates in NADP(+) binding. Residues 180-325 enclose the KARI C-terminal knotted domain; it reads TFVDETETDL…ARLRSRMTCA (146 aa). Asp-188, Glu-192, Glu-224, and Glu-228 together coordinate Mg(2+). Residue Ser-249 coordinates substrate.

This sequence belongs to the ketol-acid reductoisomerase family. Mg(2+) is required as a cofactor.

The enzyme catalyses (2R)-2,3-dihydroxy-3-methylbutanoate + NADP(+) = (2S)-2-acetolactate + NADPH + H(+). It carries out the reaction (2R,3R)-2,3-dihydroxy-3-methylpentanoate + NADP(+) = (S)-2-ethyl-2-hydroxy-3-oxobutanoate + NADPH + H(+). It functions in the pathway amino-acid biosynthesis; L-isoleucine biosynthesis; L-isoleucine from 2-oxobutanoate: step 2/4. Its pathway is amino-acid biosynthesis; L-valine biosynthesis; L-valine from pyruvate: step 2/4. In terms of biological role, involved in the biosynthesis of branched-chain amino acids (BCAA). Catalyzes an alkyl-migration followed by a ketol-acid reduction of (S)-2-acetolactate (S2AL) to yield (R)-2,3-dihydroxy-isovalerate. In the isomerase reaction, S2AL is rearranged via a Mg-dependent methyl migration to produce 3-hydroxy-3-methyl-2-ketobutyrate (HMKB). In the reductase reaction, this 2-ketoacid undergoes a metal-dependent reduction by NADPH to yield (R)-2,3-dihydroxy-isovalerate. The chain is Ketol-acid reductoisomerase (NADP(+)) from Tremblaya princeps.